The chain runs to 98 residues: RNA-binding protein Hfq (98 aa).

Residues D11–V71 enclose the Sm domain.

This sequence belongs to the Hfq family. Homohexamer.

Functionally, RNA chaperone that binds small regulatory RNA (sRNAs) and mRNAs to facilitate mRNA translational regulation in response to envelope stress, environmental stress and changes in metabolite concentrations. Also binds with high specificity to tRNAs. This Gluconacetobacter diazotrophicus (strain ATCC 49037 / DSM 5601 / CCUG 37298 / CIP 103539 / LMG 7603 / PAl5) protein is RNA-binding protein Hfq.